Consider the following 475-residue polypeptide: Ribulose bisphosphate carboxylase large chain (475 aa).

A propeptide spanning residues 1–2 (MS) is cleaved from the precursor. The residue at position 3 (proline 3) is an N-acetylproline. An N6,N6,N6-trimethyllysine modification is found at lysine 14. Substrate contacts are provided by asparagine 123 and threonine 173. The active-site Proton acceptor is lysine 175. Substrate is bound at residue lysine 177. Positions 201, 203, and 204 each coordinate Mg(2+). Lysine 201 is modified (N6-carboxylysine). The active-site Proton acceptor is histidine 294. The substrate site is built by arginine 295, histidine 327, and serine 379.

The protein belongs to the RuBisCO large chain family. Type I subfamily. Heterohexadecamer of 8 large chains and 8 small chains; disulfide-linked. The disulfide link is formed within the large subunit homodimers. The cofactor is Mg(2+). Post-translationally, the disulfide bond which can form in the large chain dimeric partners within the hexadecamer appears to be associated with oxidative stress and protein turnover.

The protein resides in the plastid. The protein localises to the chloroplast. The enzyme catalyses 2 (2R)-3-phosphoglycerate + 2 H(+) = D-ribulose 1,5-bisphosphate + CO2 + H2O. It carries out the reaction D-ribulose 1,5-bisphosphate + O2 = 2-phosphoglycolate + (2R)-3-phosphoglycerate + 2 H(+). In terms of biological role, ruBisCO catalyzes two reactions: the carboxylation of D-ribulose 1,5-bisphosphate, the primary event in carbon dioxide fixation, as well as the oxidative fragmentation of the pentose substrate in the photorespiration process. Both reactions occur simultaneously and in competition at the same active site. This Buxus microphylla (Littleleaf boxwood) protein is Ribulose bisphosphate carboxylase large chain.